The chain runs to 300 residues: GTPase Era (300 aa).

The 169-residue stretch at 8–176 folds into the Era-type G domain; it reads RCGYVAIVGR…ESLIASHLPE (169 aa). Residues 16 to 23 form a G1 region; that stretch reads GRPNVGKS. 16–23 provides a ligand contact to GTP; that stretch reads GRPNVGKS. The interval 42–46 is G2; that stretch reads QTTRH. The interval 63–66 is G3; it reads DTPG. GTP contacts are provided by residues 63–67 and 125–128; these read DTPGM and NKTD. The segment at 125-128 is G4; sequence NKTD. The G5 stretch occupies residues 155 to 157; sequence ISA. In terms of domain architecture, KH type-2 spans 199–283; that stretch reads VREKIMRQLG…MLNLWVKVKG (85 aa).

The protein belongs to the TRAFAC class TrmE-Era-EngA-EngB-Septin-like GTPase superfamily. Era GTPase family. As to quaternary structure, monomer.

It localises to the cytoplasm. The protein localises to the cell inner membrane. In terms of biological role, an essential GTPase that binds both GDP and GTP, with rapid nucleotide exchange. Plays a role in 16S rRNA processing and 30S ribosomal subunit biogenesis and possibly also in cell cycle regulation and energy metabolism. The sequence is that of GTPase Era from Pseudomonas savastanoi pv. phaseolicola (strain 1448A / Race 6) (Pseudomonas syringae pv. phaseolicola (strain 1448A / Race 6)).